A 599-amino-acid polypeptide reads, in one-letter code: Capsular polysaccharide biosynthesis protein CapD (599 aa).

Transmembrane regions (helical) follow at residues 12 to 32 (ILII…YAIL), 41 to 61 (IDLL…FAYV), 79 to 99 (SVLK…SLLI), and 102 to 122 (SPFL…IGGS).

The protein belongs to the polysaccharide synthase family.

It localises to the cell membrane. It participates in capsule biogenesis; capsule polysaccharide biosynthesis. Its function is as follows. Required for the biosynthesis of type 1 capsular polysaccharide. This chain is Capsular polysaccharide biosynthesis protein CapD (capD), found in Staphylococcus aureus.